A 450-amino-acid chain; its full sequence is uncharacterized protein (450 aa).

The next 12 membrane-spanning stretches (helical) occupy residues 10-30 (IIVL…LVIA), 53-73 (LGGG…AIAI), 95-115 (TAGN…LFAI), 120-140 (LLPV…SIFN), 148-168 (AVAC…PVGF), 199-219 (LAML…IFIT), 242-262 (IANI…ATFA), 267-287 (TSST…CGIF), 302-322 (LMAM…VINA), 343-363 (IAAL…GSSF), 378-398 (LSFG…AALG), and 428-448 (VVPT…IAAM).

It localises to the cell membrane. This is an uncharacterized protein from Haemophilus influenzae (strain ATCC 51907 / DSM 11121 / KW20 / Rd).